Consider the following 201-residue polypeptide: Large ribosomal subunit protein uL4 (201 aa).

Residues 45-66 (AQLTRSEVSGGGKKPWRQKGTG) form a disordered region.

This sequence belongs to the universal ribosomal protein uL4 family. In terms of assembly, part of the 50S ribosomal subunit.

In terms of biological role, one of the primary rRNA binding proteins, this protein initially binds near the 5'-end of the 23S rRNA. It is important during the early stages of 50S assembly. It makes multiple contacts with different domains of the 23S rRNA in the assembled 50S subunit and ribosome. Functionally, forms part of the polypeptide exit tunnel. In Aeromonas hydrophila subsp. hydrophila (strain ATCC 7966 / DSM 30187 / BCRC 13018 / CCUG 14551 / JCM 1027 / KCTC 2358 / NCIMB 9240 / NCTC 8049), this protein is Large ribosomal subunit protein uL4.